The sequence spans 122 residues: MVRGIRGAITVEEDTPEAIHQATRELLLKMLEANGIQSYEELAAVIFTVTEDLTSAFPAEAARQIGMHRVPLLSAREVPVPGSLPRVIRVLALWNTDTPQDRVRHVYLREAVRLRPDLESAQ.

Residues 2–120 form the Chorismate mutase aroH-type domain; sequence VRGIRGAITV…AVRLRPDLES (119 aa). Positions 6, 89, and 107 each coordinate prephenate.

Homotrimer.

It is found in the cytoplasm. The enzyme catalyses chorismate = prephenate. It functions in the pathway metabolic intermediate biosynthesis; prephenate biosynthesis; prephenate from chorismate: step 1/1. Its activity is regulated as follows. Inhibited by 40% with 500 uM tyrosine, and a tyrosine concentration as high as 5 mM reduced activity to 5%. In terms of biological role, catalyzes the Claisen rearrangement of chorismate to prephenate. Probably involved in the aromatic amino acid biosynthesis. The sequence is that of Chorismate mutase AroH from Thermus thermophilus.